We begin with the raw amino-acid sequence, 297 residues long: N-acetylmuramic acid 6-phosphate etherase (297 aa).

In terms of domain architecture, SIS spans 55–218 (AAAALKSGGR…STGAMVKFGK (164 aa)). Glu-83 acts as the Proton donor in catalysis. Glu-114 is an active-site residue.

This sequence belongs to the GCKR-like family. MurNAc-6-P etherase subfamily. As to quaternary structure, homodimer.

The enzyme catalyses N-acetyl-D-muramate 6-phosphate + H2O = N-acetyl-D-glucosamine 6-phosphate + (R)-lactate. It participates in amino-sugar metabolism; 1,6-anhydro-N-acetylmuramate degradation. It functions in the pathway amino-sugar metabolism; N-acetylmuramate degradation. The protein operates within cell wall biogenesis; peptidoglycan recycling. Specifically catalyzes the cleavage of the D-lactyl ether substituent of MurNAc 6-phosphate, producing GlcNAc 6-phosphate and D-lactate. Together with AnmK, is also required for the utilization of anhydro-N-acetylmuramic acid (anhMurNAc) either imported from the medium or derived from its own cell wall murein, and thus plays a role in cell wall recycling. The chain is N-acetylmuramic acid 6-phosphate etherase from Salmonella typhi.